A 144-amino-acid polypeptide reads, in one-letter code: 3-dehydroquinate dehydratase (144 aa).

The Proton acceptor role is filled by tyrosine 22. Substrate-binding residues include asparagine 71, histidine 77, and aspartate 84. Histidine 97 serves as the catalytic Proton donor. Substrate contacts are provided by residues 98–99 (IS) and arginine 108.

This sequence belongs to the type-II 3-dehydroquinase family. In terms of assembly, homododecamer.

It catalyses the reaction 3-dehydroquinate = 3-dehydroshikimate + H2O. It functions in the pathway metabolic intermediate biosynthesis; chorismate biosynthesis; chorismate from D-erythrose 4-phosphate and phosphoenolpyruvate: step 3/7. In terms of biological role, catalyzes a trans-dehydration via an enolate intermediate. The sequence is that of 3-dehydroquinate dehydratase from Thermotoga petrophila (strain ATCC BAA-488 / DSM 13995 / JCM 10881 / RKU-1).